Here is a 161-residue protein sequence, read N- to C-terminus: Nucleotide-binding protein Shal_3198 (161 aa).

Belongs to the YajQ family.

In terms of biological role, nucleotide-binding protein. The polypeptide is Nucleotide-binding protein Shal_3198 (Shewanella halifaxensis (strain HAW-EB4)).